An 864-amino-acid chain; its full sequence is Mitochondrial 15S rRNA processing factor CCM1 (864 aa).

A mitochondrion-targeting transit peptide spans 1-76 (MYMARCGPKN…REFSNTLKER (76 aa)). PPR repeat units lie at residues 319–353 (NKQN…STKH) and 356–390 (DICT…NIKP).

This sequence belongs to the CCM1 family. As to quaternary structure, binds to mitochondrial small subunit 15S rRNA.

The protein resides in the mitochondrion. Its function is as follows. Regulates mitochondrial small subunit maturation by controlling 15S rRNA 5'-end processing. Localizes to the 5' precursor of the 15S rRNA in a position that is subsequently occupied by mS47 in the mature yeast mtSSU. Uses structure and sequence-specific RNA recognition, binding to a single-stranded region of the precursor and specifically recognizing bases -6 to -1. The exchange of Ccm1 for mS47 is coupled to the irreversible removal of precursor rRNA that is accompanied by conformational changes of the mitoribosomal proteins uS5m and mS26. These conformational changes signal completion of 5'-end rRNA processing through protection of the mature 5'-end of the 15S rRNA and stabilization of mS47. The removal of the 5' precursor together with the dissociation of Ccm1 may be catalyzed by the 5'-3' exoribonuclease Pet127. Involved in the specific removal of group I introns in mitochondrial encoded transcripts. The protein is Mitochondrial 15S rRNA processing factor CCM1 (CCM1) of Saccharomyces cerevisiae (strain JAY291) (Baker's yeast).